We begin with the raw amino-acid sequence, 2620 residues long: Highly reducing polyketide synthase tazB (2620 aa).

The tract at residues 1 to 22 (MPFLNGNTTHHEAHSAEPDHGN) is disordered. The region spanning 1–416 (MPFLNGNTTH…GTNAHCILDD (416 aa)) is the Ketosynthase family 3 (KS3) domain. A compositionally biased stretch (basic and acidic residues) spans 9-22 (THHEAHSAEPDHGN). Catalysis depends on for beta-ketoacyl synthase activity residues Cys-166, His-301, and His-340. The tract at residues 460–481 (GFNKFDEPRGSDSAGSNANGSH) is disordered. A compositionally biased stretch (low complexity) spans 470-481 (SDSAGSNANGSH). The interval 601 to 923 (VFTGQGAQYA…PYLATLSRKD (323 aa)) is malonyl-CoA:ACP transacylase (MAT) domain. Residues 993–1128 (HDLFGAPVPD…GEVSPDLKKS (136 aa)) form an N-terminal hotdog fold region. The interval 993-1313 (HDLFGAPVPD…LAGIRLSPFK (321 aa)) is dehydratase (DH) domain. The 326-residue stretch at 993–1318 (HDLFGAPVPD…LSPFKPESSE (326 aa)) folds into the PKS/mFAS DH domain. Residue His-1025 is the Proton acceptor; for dehydratase activity of the active site. The segment at 1157 to 1318 (TAPVDFTPVY…LSPFKPESSE (162 aa)) is C-terminal hotdog fold. Residue Asp-1225 is the Proton donor; for dehydratase activity of the active site. A methyltransferase (CMet) domain region spans residues 1379 to 1680 (GLRESREMKD…VDFEASSSIY (302 aa)). The interval 1910–2227 (GIDSLTWVTD…TGKSIGKVTL (318 aa)) is enoyl reductase (ER) domain. The interval 2251 to 2425 (SFILAGGLGG…HGASVNLGAV (175 aa)) is ketoreductase (KR) domain. The region spanning 2539–2620 (EAARIIHKAL…VSLSSFTKFR (82 aa)) is the Carrier domain. Ser-2576 carries the post-translational modification O-(pantetheine 4'-phosphoryl)serine.

It participates in secondary metabolite biosynthesis. In terms of biological role, highly reducing polyketide synthase; part of the gene cluster that mediates the biosynthesis of azaterrilone A and other azaphilones, a class of fungal metabolites characterized by a highly oxygenated pyrano-quinone bicyclic core and exhibiting a broad range of bioactivities. The first step of the pathway begins with the non-reducing polyketide synthase tazA that assembles one acetyl-CoA starter unit, five malonyl-CoA units, and catalyzes a series of Claisen condensations, methylation, PT-mediated cyclization, and finally releases the first hexaketide precursor through the R-domain. The tazA product then undergoes reduction on its terminal ketone and the following pyran-ring formation by yet undetermined enzyme(s). Dehydration and enoyl reduction, possibly involving the trans-enoyl reductase tazE leads to the next intermediate. TazD is predicted as an acetyltransferase and might catalyze the acetylation steps leading to the synthesis of azaterrilone A. Azaterrilone A is not the final product of the taz pathway and both the highly reducing polyketide synthase tazB and the dual enzyme tazHJ catalyze late steps of the pathway, leading to the production of the 2 final stereoisomers that contain additional polyketide modification whose structures have still to be determined. The polypeptide is Highly reducing polyketide synthase tazB (Aspergillus terreus (strain NIH 2624 / FGSC A1156)).